We begin with the raw amino-acid sequence, 286 residues long: MKLSKKYLLAVPFFVLMVIFFVVPMAWIIVSGLQNENGASITEKYQPLVGGYSFFQSFWTSLWTATVTVLVALLVAFPFCYFLSQSKNKVFRSFVIALATAPIWSSFLIKLIGLKTLLDLVLGLALNRVGDNNLTFGSGYTLIGMIYLFTPFMFLPLYNNFCILPKNLILASQDLGYNWITSFIKVVIPFSKTAILSGIALTFFPSLTSVAIAQFLDNSNQNNTLGNYVFTLGNNGYDSAIERGRASGAIIIAALITFAFYFVVIFAPRIVRLIQTKCLKYRRVNV.

6 consecutive transmembrane segments (helical) span residues 10 to 30 (AVPF…WIIV), 62 to 82 (LWTA…FCYF), 94 to 114 (FVIA…LIGL), 136 to 156 (FGSG…MFLP), 193 to 213 (TAIL…VAIA), and 248 to 268 (GAII…IFAP). The ABC transmembrane type-1 domain maps to 58–264 (FWTSLWTATV…LITFAFYFVV (207 aa)).

Belongs to the binding-protein-dependent transport system permease family. CysTW subfamily.

The protein localises to the cell membrane. Its function is as follows. Required for the activity of the bacterial transport system of putrescine and spermidine. This Mycoplasma pneumoniae (strain ATCC 29342 / M129 / Subtype 1) (Mycoplasmoides pneumoniae) protein is Spermidine/putrescine transport system permease protein PotB homolog (potB).